A 150-amino-acid chain; its full sequence is Large ribosomal subunit protein uL22c (150 aa).

The protein belongs to the universal ribosomal protein uL22 family. Part of the 50S ribosomal subunit.

Its subcellular location is the plastid. The protein localises to the chloroplast. Functionally, this protein binds specifically to 23S rRNA. Its function is as follows. The globular domain of the protein is located near the polypeptide exit tunnel on the outside of the subunit, while an extended beta-hairpin is found that lines the wall of the exit tunnel in the center of the 70S ribosome. The sequence is that of Large ribosomal subunit protein uL22c (rpl22) from Fagopyrum esculentum subsp. ancestrale (Wild buckwheat).